The chain runs to 276 residues: Rhomboid protease GlpG (276 aa).

Transmembrane regions (helical) follow at residues 94-114 (GPVTWIVMLACVVVYIAMSLI), 142-162 (IFMHFSLMHILFNLLWWWYLG), 169-189 (LGSGKLIVITVISALLSGYVQ), 192-212 (FSGPWFGGLSGVVYALMGYVW), 229-249 (LIIFALLWIVAGWFDWFGMSM), and 250-270 (ANGAHIAGLIVGLAMAFVDTL). Residue Ser-201 is the Nucleophile of the active site. His-254 is a catalytic residue.

Belongs to the peptidase S54 family.

The protein localises to the cell inner membrane. The catalysed reaction is Cleaves type-1 transmembrane domains using a catalytic dyad composed of serine and histidine that are contributed by different transmembrane domains.. Its function is as follows. Rhomboid-type serine protease that catalyzes intramembrane proteolysis. The polypeptide is Rhomboid protease GlpG (Salmonella typhi).